The chain runs to 459 residues: UDP-N-acetylmuramoylalanine--D-glutamate ligase (459 aa).

118-124 is an ATP binding site; that stretch reads GTNGKTT.

The protein belongs to the MurCDEF family.

The protein localises to the cytoplasm. It catalyses the reaction UDP-N-acetyl-alpha-D-muramoyl-L-alanine + D-glutamate + ATP = UDP-N-acetyl-alpha-D-muramoyl-L-alanyl-D-glutamate + ADP + phosphate + H(+). It participates in cell wall biogenesis; peptidoglycan biosynthesis. Its function is as follows. Cell wall formation. Catalyzes the addition of glutamate to the nucleotide precursor UDP-N-acetylmuramoyl-L-alanine (UMA). The sequence is that of UDP-N-acetylmuramoylalanine--D-glutamate ligase from Desulfosudis oleivorans (strain DSM 6200 / JCM 39069 / Hxd3) (Desulfococcus oleovorans).